The primary structure comprises 464 residues: Methionine aminopeptidase 2-2 (464 aa).

The tract at residues 1–106 is disordered; the sequence is MGAKTYEGGD…PRVPLSQLFP (106 aa). A compositionally biased stretch (acidic residues) spans 37-53; that stretch reads EDGDGEFGSDDDDDGGD. Basic residues predominate over residues 70 to 86; sequence PKKKKRSKKKKNNKKKS. Histidine 216 lines the substrate pocket. Residues aspartate 237, aspartate 248, and histidine 317 each coordinate a divalent metal cation. Residue histidine 325 coordinates substrate. 2 residues coordinate a divalent metal cation: glutamate 350 and glutamate 445.

This sequence belongs to the peptidase M24A family. Methionine aminopeptidase eukaryotic type 2 subfamily. Requires Co(2+) as cofactor. Zn(2+) is required as a cofactor. Mn(2+) serves as cofactor. The cofactor is Fe(2+).

Its subcellular location is the cytoplasm. The catalysed reaction is Release of N-terminal amino acids, preferentially methionine, from peptides and arylamides.. Cotranslationally removes the N-terminal methionine from nascent proteins. The N-terminal methionine is often cleaved when the second residue in the primary sequence is small and uncharged (Met-Ala-, Cys, Gly, Pro, Ser, Thr, or Val). This is Methionine aminopeptidase 2-2 from Talaromyces stipitatus (strain ATCC 10500 / CBS 375.48 / QM 6759 / NRRL 1006) (Penicillium stipitatum).